A 559-amino-acid chain; its full sequence is Actin-binding protein WASF1 (559 aa).

Disordered regions lie at residues 170–202, 304–383, and 412–490; these read EDKR…DRRR, IENR…GVLH, and VHPL…HPST. The span at 182–202 shows a compositional bias: basic and acidic residues; that stretch reads KNLDRPHEPEKVPRAPHDRRR. Polar residues predominate over residues 304–313; sequence IENRPQSPAT. Over residues 322–332 the composition is skewed to pro residues; that stretch reads PTPPPPPPPLP. A compositionally biased stretch (low complexity) spans 333 to 346; it reads SALSTSSLRASMTS. Arg-341 is modified (asymmetric dimethylarginine; alternate). Arg-341 is subject to Omega-N-methylarginine; alternate. Pro residues-rich tracts occupy residues 347–360, 423–437, and 460–477; these read TPPP…PPPA, LPPP…PPGI, and STAP…PPSQ. The residue at position 489 (Ser-489) is a Phosphoserine. One can recognise a WH2 domain in the interval 497–514; that stretch reads ARSVLLEAIRKGIQLRKV.

It belongs to the SCAR/WAVE family. In terms of assembly, component of the WAVE1 complex composed of ABI2, CYFIP1 or CYFIP2, BRK1, NCKAP1 and WASF1/WAVE1. Within the complex, a heterodimer containing NCKAP1 and CYFIP1 interacts with a heterotrimer formed by WAVE1, ABI2 and BRK1. CYFIP2 binds to activated RAC1 which causes the complex to dissociate, releasing activated WASF1. The complex can also be activated by NCK1. Binds actin and the Arp2/3 complex. Interacts with BAIAP2. Interacts with SHANK3; the interaction mediates the association of SHANK3 with the WAVE1 complex. Interacts with ABI1 (via N-terminus). Interacts with SORBS2; this interaction greatly enhances phosphorylation by ABL1 and dephosphorylation by PTPN12 and might mediate partial to focal adhesion sites.

It localises to the cytoplasm. The protein resides in the cytoskeleton. It is found in the synapse. Its subcellular location is the cell junction. The protein localises to the focal adhesion. In terms of biological role, downstream effector molecule involved in the transmission of signals from tyrosine kinase receptors and small GTPases to the actin cytoskeleton. Promotes formation of actin filaments. Part of the WAVE complex that regulates lamellipodia formation. The WAVE complex regulates actin filament reorganization via its interaction with the Arp2/3 complex. As component of the WAVE1 complex, required for BDNF-NTRK2 endocytic trafficking and signaling from early endosomes. Also involved in the regulation of mitochondrial dynamics. The protein is Actin-binding protein WASF1 (WASF1) of Pongo abelii (Sumatran orangutan).